Reading from the N-terminus, the 42-residue chain is Photosystem I reaction center subunit IX (42 aa).

The chain crosses the membrane as a helical span at residues 7-27; it reads YLSTAPVLSALWFAILAGLLI.

Belongs to the PsaJ family.

It localises to the plastid. Its subcellular location is the chloroplast thylakoid membrane. Its function is as follows. May help in the organization of the PsaE and PsaF subunits. This Chlorokybus atmophyticus (Soil alga) protein is Photosystem I reaction center subunit IX.